The following is a 292-amino-acid chain: Undecaprenyl-diphosphatase (292 aa).

5 consecutive transmembrane segments (helical) span residues 87 to 107 (MGWY…LFEE), 113 to 133 (FRDL…LGMV), 190 to 210 (AFLL…KDIG), 219 to 239 (ATIV…AWFM), and 250 to 270 (FVYY…FGVL).

The protein belongs to the UppP family.

The protein localises to the cell membrane. It carries out the reaction di-trans,octa-cis-undecaprenyl diphosphate + H2O = di-trans,octa-cis-undecaprenyl phosphate + phosphate + H(+). Functionally, catalyzes the dephosphorylation of undecaprenyl diphosphate (UPP). Confers resistance to bacitracin. This chain is Undecaprenyl-diphosphatase, found in Thermobifida fusca (strain YX).